We begin with the raw amino-acid sequence, 172 residues long: Bifunctional protein PyrR (172 aa).

A PRPP-binding motif is present at residues Val-93–Thr-105.

The protein belongs to the purine/pyrimidine phosphoribosyltransferase family. PyrR subfamily. As to quaternary structure, homodimer and homohexamer; in equilibrium.

It catalyses the reaction UMP + diphosphate = 5-phospho-alpha-D-ribose 1-diphosphate + uracil. Regulates transcriptional attenuation of the pyrimidine nucleotide (pyr) operon by binding in a uridine-dependent manner to specific sites on pyr mRNA. This disrupts an antiterminator hairpin in the RNA and favors formation of a downstream transcription terminator, leading to a reduced expression of downstream genes. Functionally, also displays a weak uracil phosphoribosyltransferase activity which is not physiologically significant. This Streptococcus sanguinis (strain SK36) protein is Bifunctional protein PyrR.